The primary structure comprises 366 residues: uncharacterized protein (366 aa).

An OBG-type G domain is found at Gly64–Asn289. GTP-binding positions include Gly70–Ser77, Asp116–Ile120, and Asn247–Asp250. The TGS domain occupies Asn289–Lys365.

This sequence belongs to the TRAFAC class OBG-HflX-like GTPase superfamily. OBG GTPase family.

This is an uncharacterized protein from Schizosaccharomyces pombe (strain 972 / ATCC 24843) (Fission yeast).